A 258-amino-acid chain; its full sequence is Ribosomal RNA small subunit methyltransferase A (258 aa).

Residues H13, L15, G40, E61, D86, and N106 each coordinate S-adenosyl-L-methionine.

The protein belongs to the class I-like SAM-binding methyltransferase superfamily. rRNA adenine N(6)-methyltransferase family. RsmA subfamily.

Its subcellular location is the cytoplasm. It carries out the reaction adenosine(1518)/adenosine(1519) in 16S rRNA + 4 S-adenosyl-L-methionine = N(6)-dimethyladenosine(1518)/N(6)-dimethyladenosine(1519) in 16S rRNA + 4 S-adenosyl-L-homocysteine + 4 H(+). Specifically dimethylates two adjacent adenosines (A1518 and A1519) in the loop of a conserved hairpin near the 3'-end of 16S rRNA in the 30S particle. May play a critical role in biogenesis of 30S subunits. The polypeptide is Ribosomal RNA small subunit methyltransferase A (Coxiella burnetii (strain Dugway 5J108-111)).